A 163-amino-acid chain; its full sequence is Small ribosomal subunit protein bS6 (163 aa).

Residues 97-163 (EEGQTAMLTN…GRNEGEGDRA (67 aa)) are disordered. The span at 122–163 (RGPRRDFGDRGPRRDFGDRGPRRDGDGPRAEGGRNEGEGDRA) shows a compositional bias: basic and acidic residues.

Belongs to the bacterial ribosomal protein bS6 family.

In terms of biological role, binds together with bS18 to 16S ribosomal RNA. The sequence is that of Small ribosomal subunit protein bS6 from Rhodospirillum centenum (strain ATCC 51521 / SW).